The primary structure comprises 125 residues: Large ribosomal subunit protein bL20 (125 aa).

It belongs to the bacterial ribosomal protein bL20 family.

In terms of biological role, binds directly to 23S ribosomal RNA and is necessary for the in vitro assembly process of the 50S ribosomal subunit. It is not involved in the protein synthesizing functions of that subunit. In Methylobacterium sp. (strain 4-46), this protein is Large ribosomal subunit protein bL20.